Here is a 362-residue protein sequence, read N- to C-terminus: Ferredoxin--NADP reductase, leaf isozyme 1, chloroplastic (362 aa).

A chloroplast-targeting transit peptide spans 1-62 (MAAVTAAAVS…DAAAVAAAPA (62 aa)). The 123-residue stretch at 83–205 (KEPYVGKCLL…TGPVGKEMLM (123 aa)) folds into the FAD-binding FR-type domain. Residues 141–144 (RLYS), 162–164 (CVK), tyrosine 168, 179–181 (VCS), and threonine 220 each bind FAD. Residues serine 144 and lysine 164 each coordinate NADP(+). Cysteines 180 and 185 form a disulfide. Position 181 is a phosphoserine (serine 181). NADP(+)-binding positions include threonine 220, 252-253 (VP), 282-283 (SR), lysine 292, 321-322 (GL), and glutamate 360.

It belongs to the ferredoxin--NADP reductase type 1 family. As to quaternary structure, component of high molecular weight thylakoid LFNRs-containing protein complexes containing LIR1, LFNR1, LFNR2, TIC62 and TROL proteins. Interacts directly with LIR1 and TIC62; LIR1 increases the affinity of LFNR1 and LFNR2 for TIC62. The cofactor is FAD. Post-translationally, may form interchain disulfide bonds with LIR1.

It is found in the plastid. The protein localises to the chloroplast stroma. It localises to the chloroplast thylakoid membrane. The enzyme catalyses 2 reduced [2Fe-2S]-[ferredoxin] + NADP(+) + H(+) = 2 oxidized [2Fe-2S]-[ferredoxin] + NADPH. It participates in energy metabolism; photosynthesis. In terms of biological role, may play a key role in regulating the relative amounts of cyclic and non-cyclic electron flow to meet the demands of the plant for ATP and reducing power. The polypeptide is Ferredoxin--NADP reductase, leaf isozyme 1, chloroplastic (Oryza sativa subsp. japonica (Rice)).